The primary structure comprises 563 residues: Arginine--tRNA ligase (563 aa).

The short motif at 121–131 is the 'HIGH' region element; it reads PNIAKPFSIGH.

Belongs to the class-I aminoacyl-tRNA synthetase family. As to quaternary structure, monomer.

The protein resides in the cytoplasm. The catalysed reaction is tRNA(Arg) + L-arginine + ATP = L-arginyl-tRNA(Arg) + AMP + diphosphate. In Streptococcus pyogenes serotype M2 (strain MGAS10270), this protein is Arginine--tRNA ligase.